The following is an 80-amino-acid chain: Protein FAM229B (80 aa).

The segment at 1 to 44 is disordered; it reads MPFRFGTQPRRFPVEGGDSSIGLEPGLSSSAACNGKEMSPTRQL.

It belongs to the FAM229 family.

In Macaca fascicularis (Crab-eating macaque), this protein is Protein FAM229B (FAM229B).